A 729-amino-acid chain; its full sequence is Translation initiation factor IF-2 (729 aa).

Residues Gln20–Pro141 are disordered. Over residues Ala22–Gly91 the composition is skewed to gly residues. Residues Gly92–Arg108 are compositionally biased toward basic and acidic residues. Low complexity predominate over residues Ser112–Gly127. Residues Pro229–Glu396 enclose the tr-type G domain. The tract at residues Gly238–Thr245 is G1. Gly238–Thr245 contacts GTP. The segment at Gly263–His267 is G2. The segment at Asp284–Gly287 is G3. GTP contacts are provided by residues Asp284–His288 and Asn338–Asp341. The G4 stretch occupies residues Asn338–Asp341. The G5 stretch occupies residues Ser374 to Lys376.

This sequence belongs to the TRAFAC class translation factor GTPase superfamily. Classic translation factor GTPase family. IF-2 subfamily.

The protein localises to the cytoplasm. One of the essential components for the initiation of protein synthesis. Protects formylmethionyl-tRNA from spontaneous hydrolysis and promotes its binding to the 30S ribosomal subunits. Also involved in the hydrolysis of GTP during the formation of the 70S ribosomal complex. The chain is Translation initiation factor IF-2 from Roseiflexus sp. (strain RS-1).